The following is a 226-amino-acid chain: Glutathione peroxidase 3 (226 aa).

Positions 1-24 are cleaved as a signal peptide; sequence MARILRASCLLSLLLAGFVPPGRG. Residue selenocysteine 73 is part of the active site. Residue selenocysteine 73 is a non-standard amino acid, selenocysteine.

Belongs to the glutathione peroxidase family. Homotetramer. In terms of tissue distribution, secreted in plasma.

The protein resides in the secreted. It catalyses the reaction 2 glutathione + H2O2 = glutathione disulfide + 2 H2O. The enzyme catalyses tert-butyl hydroperoxide + 2 glutathione = tert-butanol + glutathione disulfide + H2O. Its function is as follows. Protects cells and enzymes from oxidative damage, by catalyzing the reduction of hydrogen peroxide, lipid peroxides and organic hydroperoxide, by glutathione. This chain is Glutathione peroxidase 3, found in Mus musculus (Mouse).